A 292-amino-acid polypeptide reads, in one-letter code: Phosphatidylserine decarboxylase proenzyme (292 aa).

Active-site charge relay system; for autoendoproteolytic cleavage activity residues include D92, H149, and S256. S256 acts as the Schiff-base intermediate with substrate; via pyruvic acid; for decarboxylase activity in catalysis. At S256 the chain carries Pyruvic acid (Ser); by autocatalysis.

It belongs to the phosphatidylserine decarboxylase family. PSD-B subfamily. Prokaryotic type I sub-subfamily. Heterodimer of a large membrane-associated beta subunit and a small pyruvoyl-containing alpha subunit. It depends on pyruvate as a cofactor. Is synthesized initially as an inactive proenzyme. Formation of the active enzyme involves a self-maturation process in which the active site pyruvoyl group is generated from an internal serine residue via an autocatalytic post-translational modification. Two non-identical subunits are generated from the proenzyme in this reaction, and the pyruvate is formed at the N-terminus of the alpha chain, which is derived from the carboxyl end of the proenzyme. The autoendoproteolytic cleavage occurs by a canonical serine protease mechanism, in which the side chain hydroxyl group of the serine supplies its oxygen atom to form the C-terminus of the beta chain, while the remainder of the serine residue undergoes an oxidative deamination to produce ammonia and the pyruvoyl prosthetic group on the alpha chain. During this reaction, the Ser that is part of the protease active site of the proenzyme becomes the pyruvoyl prosthetic group, which constitutes an essential element of the active site of the mature decarboxylase.

The protein localises to the cell membrane. The catalysed reaction is a 1,2-diacyl-sn-glycero-3-phospho-L-serine + H(+) = a 1,2-diacyl-sn-glycero-3-phosphoethanolamine + CO2. It functions in the pathway phospholipid metabolism; phosphatidylethanolamine biosynthesis; phosphatidylethanolamine from CDP-diacylglycerol: step 2/2. Catalyzes the formation of phosphatidylethanolamine (PtdEtn) from phosphatidylserine (PtdSer). This chain is Phosphatidylserine decarboxylase proenzyme, found in Baumannia cicadellinicola subsp. Homalodisca coagulata.